The sequence spans 295 residues: uncharacterized protein (295 aa).

This is an uncharacterized protein from Methanocaldococcus jannaschii (strain ATCC 43067 / DSM 2661 / JAL-1 / JCM 10045 / NBRC 100440) (Methanococcus jannaschii).